Reading from the N-terminus, the 471-residue chain is NADH-quinone oxidoreductase subunit N (471 aa).

The next 14 helical transmembrane spans lie at 6 to 26, 30 to 50, 70 to 90, 98 to 118, 123 to 143, 158 to 178, 198 to 218, 230 to 250, 264 to 284, 292 to 312, 320 to 340, 365 to 385, 400 to 420, and 438 to 458; these read FILP…LGVY, SSNI…ILIF, LSSF…SIST, IFLI…MVMI, LMVF…LASF, FVLS…VYGF, LTFG…AVPF, PTAV…TVFI, WQPI…IAAI, LIAY…STGS, IVYM…LLML, LSLL…GFFA, FLAI…LKII, and IWLK…FIFP.

Belongs to the complex I subunit 2 family. In terms of assembly, NDH-1 is composed of 14 different subunits. Subunits NuoA, H, J, K, L, M, N constitute the membrane sector of the complex.

It localises to the cell inner membrane. The catalysed reaction is a quinone + NADH + 5 H(+)(in) = a quinol + NAD(+) + 4 H(+)(out). Functionally, NDH-1 shuttles electrons from NADH, via FMN and iron-sulfur (Fe-S) centers, to quinones in the respiratory chain. The immediate electron acceptor for the enzyme in this species is believed to be ubiquinone. Couples the redox reaction to proton translocation (for every two electrons transferred, four hydrogen ions are translocated across the cytoplasmic membrane), and thus conserves the redox energy in a proton gradient. The chain is NADH-quinone oxidoreductase subunit N from Pelagibacter ubique (strain HTCC1062).